A 364-amino-acid chain; its full sequence is Histidinol-phosphate aminotransferase (364 aa).

Positions 1 to 46 (MQPRDLSDHSPYVPGRGVEEVARDRGLDPDDLIKLSSNENPHGPSP) are disordered. A compositionally biased stretch (basic and acidic residues) spans 17–33 (GVEEVARDRGLDPDDLI). Lysine 222 carries the N6-(pyridoxal phosphate)lysine modification.

This sequence belongs to the class-II pyridoxal-phosphate-dependent aminotransferase family. Histidinol-phosphate aminotransferase subfamily. Requires pyridoxal 5'-phosphate as cofactor.

The enzyme catalyses L-histidinol phosphate + 2-oxoglutarate = 3-(imidazol-4-yl)-2-oxopropyl phosphate + L-glutamate. Its pathway is amino-acid biosynthesis; L-histidine biosynthesis; L-histidine from 5-phospho-alpha-D-ribose 1-diphosphate: step 7/9. In Halorubrum lacusprofundi (strain ATCC 49239 / DSM 5036 / JCM 8891 / ACAM 34), this protein is Histidinol-phosphate aminotransferase.